The sequence spans 130 residues: Large ribosomal subunit protein bL12 (130 aa).

This sequence belongs to the bacterial ribosomal protein bL12 family. Homodimer. Part of the ribosomal stalk of the 50S ribosomal subunit. Forms a multimeric L10(L12)X complex, where L10 forms an elongated spine to which 2 to 4 L12 dimers bind in a sequential fashion. Binds GTP-bound translation factors.

Forms part of the ribosomal stalk which helps the ribosome interact with GTP-bound translation factors. Is thus essential for accurate translation. The sequence is that of Large ribosomal subunit protein bL12 from Mycobacterium leprae (strain TN).